The following is a 1170-amino-acid chain: DNA-directed RNA polymerase subunit beta' (1170 aa).

4 residues coordinate Zn(2+): C60, C62, C75, and C78. Mg(2+) is bound by residues D449, D451, and D453. Zn(2+)-binding residues include C774, C848, C855, and C858. The interval E1145–N1170 is disordered.

The protein belongs to the RNA polymerase beta' chain family. The RNAP catalytic core consists of 2 alpha, 1 beta, 1 beta' and 1 omega subunit. When a sigma factor is associated with the core the holoenzyme is formed, which can initiate transcription. Requires Mg(2+) as cofactor. Zn(2+) is required as a cofactor.

The enzyme catalyses RNA(n) + a ribonucleoside 5'-triphosphate = RNA(n+1) + diphosphate. In terms of biological role, DNA-dependent RNA polymerase catalyzes the transcription of DNA into RNA using the four ribonucleoside triphosphates as substrates. This chain is DNA-directed RNA polymerase subunit beta', found in Pelotomaculum thermopropionicum (strain DSM 13744 / JCM 10971 / SI).